The primary structure comprises 539 residues: CTP synthase (539 aa).

Residues 1 to 267 are amidoligase domain; it reads MTKYIFVTGG…DQKVVDFLHI (267 aa). Residue Ser13 coordinates CTP. Ser13 is a UTP binding site. An ATP-binding site is contributed by 14 to 19; that stretch reads SLGKGI. Tyr54 lines the L-glutamine pocket. Residue Asp71 participates in ATP binding. Mg(2+) is bound by residues Asp71 and Glu141. CTP-binding positions include 148-150, 188-193, and Lys224; these read DME and KSKPTQ. Residues 188–193 and Lys224 contribute to the UTP site; that span reads KSKPTQ. A Glutamine amidotransferase type-1 domain is found at 294 to 537; that stretch reads KITLVGKYVE…IGAASGLQVD (244 aa). Gly356 lines the L-glutamine pocket. The active-site Nucleophile; for glutamine hydrolysis is the Cys383. L-glutamine is bound by residues 384–387, Glu407, and Arg465; that span reads LGMQ. Residues His510 and Glu512 contribute to the active site.

The protein belongs to the CTP synthase family. In terms of assembly, homotetramer.

It catalyses the reaction UTP + L-glutamine + ATP + H2O = CTP + L-glutamate + ADP + phosphate + 2 H(+). The catalysed reaction is L-glutamine + H2O = L-glutamate + NH4(+). The enzyme catalyses UTP + NH4(+) + ATP = CTP + ADP + phosphate + 2 H(+). It participates in pyrimidine metabolism; CTP biosynthesis via de novo pathway; CTP from UDP: step 2/2. With respect to regulation, allosterically activated by GTP, when glutamine is the substrate; GTP has no effect on the reaction when ammonia is the substrate. The allosteric effector GTP functions by stabilizing the protein conformation that binds the tetrahedral intermediate(s) formed during glutamine hydrolysis. Inhibited by the product CTP, via allosteric rather than competitive inhibition. In terms of biological role, catalyzes the ATP-dependent amination of UTP to CTP with either L-glutamine or ammonia as the source of nitrogen. Regulates intracellular CTP levels through interactions with the four ribonucleotide triphosphates. This chain is CTP synthase, found in Lactobacillus delbrueckii subsp. bulgaricus (strain ATCC BAA-365 / Lb-18).